The following is a 203-amino-acid chain: High frequency lysogenization protein HflD homolog (203 aa).

The protein belongs to the HflD family.

The protein resides in the cytoplasm. It is found in the cell inner membrane. The polypeptide is High frequency lysogenization protein HflD homolog (Aeromonas salmonicida (strain A449)).